The primary structure comprises 91 residues: uncharacterized protein (91 aa).

3 helical membrane passes run 9 to 29 (VLWG…PFLP), 44 to 64 (LTVN…VFAW), and 71 to 91 (QFVF…CLAL).

The protein localises to the cell membrane. This is an uncharacterized protein from Bacillus subtilis (strain 168).